A 203-amino-acid polypeptide reads, in one-letter code: Ribosome maturation factor RimP (203 aa).

The span at 1-21 shows a compositional bias: polar residues; that stretch reads MSDSEATTSTDRSESNSTATI. Positions 1–23 are disordered; it reads MSDSEATTSTDRSESNSTATIHN.

This sequence belongs to the RimP family.

Its subcellular location is the cytoplasm. Its function is as follows. Required for maturation of 30S ribosomal subunits. The chain is Ribosome maturation factor RimP from Paenarthrobacter aurescens (strain TC1).